We begin with the raw amino-acid sequence, 307 residues long: Oxygen-dependent coproporphyrinogen-III oxidase (307 aa).

Ser99 contacts substrate. His103 and His113 together coordinate a divalent metal cation. Catalysis depends on His113, which acts as the Proton donor. Substrate is bound at residue 115–117 (NVR). A divalent metal cation-binding residues include His152 and His182. Residues 247-282 (YVEFNLVFDRGTLFGLQSGGRTESILLSMPPTAGWR) form an important for dimerization region. 265-267 (GGR) provides a ligand contact to substrate.

Belongs to the aerobic coproporphyrinogen-III oxidase family. As to quaternary structure, homodimer. The cofactor is a divalent metal cation.

Its subcellular location is the cytoplasm. It carries out the reaction coproporphyrinogen III + O2 + 2 H(+) = protoporphyrinogen IX + 2 CO2 + 2 H2O. It participates in porphyrin-containing compound metabolism; protoporphyrin-IX biosynthesis; protoporphyrinogen-IX from coproporphyrinogen-III (O2 route): step 1/1. Its function is as follows. Involved in the heme biosynthesis. Catalyzes the aerobic oxidative decarboxylation of propionate groups of rings A and B of coproporphyrinogen-III to yield the vinyl groups in protoporphyrinogen-IX. In Burkholderia pseudomallei (strain 1106a), this protein is Oxygen-dependent coproporphyrinogen-III oxidase.